The chain runs to 404 residues: F-box protein At3g57590 (404 aa).

In terms of domain architecture, F-box spans 1-47 (MEPIPNDLILEIFSRLPAKSVIGFRTLSKHWASILRSPVFTELFLTR).

The polypeptide is F-box protein At3g57590 (Arabidopsis thaliana (Mouse-ear cress)).